The following is a 320-amino-acid chain: MQTRNNFSWIKEQITRSISVSLMIYIITRASISNAYPIFAQKGYENPREATGRIVCANCHLANKPVDIEVPQTVLPDTVFEAVVRIPYDMQLKQVLANGKKGALNVGAVLILPEGFELAPPDRISPEIKEKMGNLSFQSYRPNQKNILVIGPVPGQKYSEITFPILSPDPATKKDIHFLKYPIYVGGNRGRGQIYPDGSKSNNTVYNATASGIVSKILRKEKGGYEITIADASDGRQVVDIIPPGPELLVSEGESIKFEQPLTSNPNVGGFGQGDAEIVLQDPLRVQGLLFFLASVILAQIFLVLKKKQFEKVQLSEMNF.

The first 35 residues, 1–35, serve as a signal peptide directing secretion; that stretch reads MQTRNNFSWIKEQITRSISVSLMIYIITRASISNA. Residues Tyr-36, Cys-56, Cys-59, and His-60 each contribute to the heme site. Residues 286–306 form a helical membrane-spanning segment; that stretch reads VQGLLFFLASVILAQIFLVLK.

This sequence belongs to the cytochrome f family. As to quaternary structure, the 4 large subunits of the cytochrome b6-f complex are cytochrome b6, subunit IV (17 kDa polypeptide, petD), cytochrome f and the Rieske protein, while the 4 small subunits are PetG, PetL, PetM and PetN. The complex functions as a dimer. Heme is required as a cofactor.

It is found in the plastid. The protein resides in the chloroplast thylakoid membrane. In terms of biological role, component of the cytochrome b6-f complex, which mediates electron transfer between photosystem II (PSII) and photosystem I (PSI), cyclic electron flow around PSI, and state transitions. This chain is Cytochrome f, found in Lactuca sativa (Garden lettuce).